The following is a 316-amino-acid chain: Phospholipase A1 3 (316 aa).

Residues 1–4 (ADDL) form the signal peptide. Residues 5–14 (TTLRNGTLDR) constitute a propeptide that is removed on maturation. The cysteines at positions 20 and 103 are disulfide-linked. The active-site Nucleophile is Ser-153. Residue Asp-181 is the Charge relay system of the active site. Intrachain disulfides connect Cys-192–Cys-197 and Cys-235–Cys-240. His-242 serves as the catalytic Charge relay system. 3 disulfide bridges follow: Cys-257-Cys-284, Cys-258-Cys-309, and Cys-277-Cys-282.

It belongs to the AB hydrolase superfamily. Lipase family. In terms of tissue distribution, expressed by the venom gland.

The protein resides in the secreted. The enzyme catalyses a 1,2-diacyl-sn-glycero-3-phosphocholine + H2O = a 2-acyl-sn-glycero-3-phosphocholine + a fatty acid + H(+). Its function is as follows. Catalyzes the hydrolysis of phosphatidylcholine with phospholipase A1 activity. May act as an allergen and induce hemolytic activity. This Polistes dominula (European paper wasp) protein is Phospholipase A1 3.